We begin with the raw amino-acid sequence, 330 residues long: Small ribosomal subunit protein uS2 (330 aa).

It belongs to the universal ribosomal protein uS2 family.

The polypeptide is Small ribosomal subunit protein uS2 (Rhodopseudomonas palustris (strain BisA53)).